The primary structure comprises 541 residues: Valine N-monooxygenase 2 (541 aa).

Residues 1–18 (MAMNVSTTATTTASFAST) are Cytoplasmic-facing. The helical transmembrane segment at 19–41 (SSMNNTAKILLITLFISIVSTVI) threads the bilayer. Residues 42 to 541 (KLQKRASYKK…LAPHLYPTSP (500 aa)) are Lumenal-facing. Residue N277 is glycosylated (N-linked (GlcNAc...) asparagine). C477 serves as a coordination point for heme. A glycan (N-linked (GlcNAc...) asparagine) is linked at N505.

Belongs to the cytochrome P450 family. Heme serves as cofactor. Expressed in the epidermis, the next two cortex cell layers, the endodermis and the pericycle of leaf petioles. Strong expression around the laticifers among the phloem cells and in parenchymatic cells between the protoxylem and the metaxylem cells. In the leaves, preferentially expressed in the mesophyll cells adjacent to the epidermis.

The protein localises to the microsome membrane. The enzyme catalyses L-valine + 2 reduced [NADPH--hemoprotein reductase] + 2 O2 = (E)-2-methylpropanal oxime + 2 oxidized [NADPH--hemoprotein reductase] + CO2 + 3 H2O + 2 H(+). It catalyses the reaction L-valine + reduced [NADPH--hemoprotein reductase] + O2 = N-hydroxy-L-valine + oxidized [NADPH--hemoprotein reductase] + H2O + 2 H(+). The catalysed reaction is N-hydroxy-L-valine + reduced [NADPH--hemoprotein reductase] + O2 = N,N-dihydroxy-L-valine + oxidized [NADPH--hemoprotein reductase] + H2O + H(+). It carries out the reaction L-isoleucine + 2 reduced [NADPH--hemoprotein reductase] + 2 O2 = (1E,2S)-2-methylbutanal oxime + 2 oxidized [NADPH--hemoprotein reductase] + CO2 + 3 H2O + 2 H(+). The enzyme catalyses L-isoleucine + reduced [NADPH--hemoprotein reductase] + O2 = N-hydroxy-L-isoleucine + oxidized [NADPH--hemoprotein reductase] + H2O + 2 H(+). It catalyses the reaction N-hydroxy-L-isoleucine + reduced [NADPH--hemoprotein reductase] + O2 = N,N-dihydroxy-L-isoleucine + oxidized [NADPH--hemoprotein reductase] + H2O + H(+). Functionally, involved in the biosynthesis of the cyanogenic glucosides linamarin and lotaustralin. Can use L-valine or L-isoleucine as substrate. Catalyzes multi-step reactions starting with two successive N-hydroxylations using L-valine and L-isoleucine as substrates leading to the formation of N,N-dihydroxy-L-valine and N,N-dihydroxy-L-isoleucine, respectively; following spontaneous reactions lead to the production of (E)-2-methylpropanal oxime and (1E,2S)-2-methylbutanal oxime, respectively. The polypeptide is Valine N-monooxygenase 2 (Manihot esculenta (Cassava)).